An 879-amino-acid chain; its full sequence is Alanine--tRNA ligase (879 aa).

His-566, His-570, Cys-668, and His-672 together coordinate Zn(2+).

The protein belongs to the class-II aminoacyl-tRNA synthetase family. Requires Zn(2+) as cofactor.

Its subcellular location is the cytoplasm. It catalyses the reaction tRNA(Ala) + L-alanine + ATP = L-alanyl-tRNA(Ala) + AMP + diphosphate. In terms of biological role, catalyzes the attachment of alanine to tRNA(Ala) in a two-step reaction: alanine is first activated by ATP to form Ala-AMP and then transferred to the acceptor end of tRNA(Ala). Also edits incorrectly charged Ser-tRNA(Ala) and Gly-tRNA(Ala) via its editing domain. In Clostridium tetani (strain Massachusetts / E88), this protein is Alanine--tRNA ligase.